A 788-amino-acid polypeptide reads, in one-letter code: Protein translocase subunit SecA 2 (788 aa).

Residues Gln86, 104–108 (GEGKT), and Asp493 each bind ATP.

The protein belongs to the SecA family. In terms of assembly, monomer and homodimer. Part of the essential Sec protein translocation apparatus which comprises SecA, SecYEG and auxiliary proteins SecDF. Other proteins may also be involved.

It is found in the cell membrane. The protein localises to the cytoplasm. The catalysed reaction is ATP + H2O + cellular proteinSide 1 = ADP + phosphate + cellular proteinSide 2.. In terms of biological role, part of the Sec protein translocase complex. Interacts with the SecYEG preprotein conducting channel. Has a central role in coupling the hydrolysis of ATP to the transfer of proteins into and across the cell membrane, serving as an ATP-driven molecular motor driving the stepwise translocation of polypeptide chains across the membrane. The sequence is that of Protein translocase subunit SecA 2 from Geobacillus thermodenitrificans (strain NG80-2).